Consider the following 598-residue polypeptide: Replication protein E1 (598 aa).

The short motif at 76–78 is the Nuclear localization signal element; it reads KRK. A phosphoserine; by host mark is found at Ser-82 and Ser-91. Residues 90-99 carry the Nuclear export signal motif; it reads LSPQLQAVKI. The DNA-binding region stretch occupies residues 138-302; it reads SQDGGGDINL…LVSHQAATTA (165 aa). In terms of domain architecture, SF3 helicase spans 401–551; sequence VNILSFLIVL…MPFLDDGSPM (151 aa). 427–434 is an ATP binding site; it reads GPPDTGKS. A Glycyl lysine isopeptide (Lys-Gly) (interchain with G-Cter in SUMO) cross-link involves residue Lys-508. Positions 573–598 are disordered; sequence TDPEEESNGVPSRAFRCTSRSNSDSY.

This sequence belongs to the papillomaviridae E1 protein family. Can form hexamers. Interacts with E2 protein; this interaction increases E1 DNA binding specificity. Interacts with host DNA polymerase subunit POLA2. Interacts with host single stranded DNA-binding protein RPA1. Interacts with host TOP1; this interaction stimulates the enzymatic activity of TOP1. Post-translationally, phosphorylated. Sumoylated.

The protein localises to the host nucleus. The enzyme catalyses Couples ATP hydrolysis with the unwinding of duplex DNA by translocating in the 3'-5' direction.. The catalysed reaction is ATP + H2O = ADP + phosphate + H(+). Its function is as follows. ATP-dependent DNA 3'-5' helicase required for initiation of viral DNA replication. It forms a complex with the viral E2 protein. The E1-E2 complex binds to the replication origin which contains binding sites for both proteins. During the initial step, a dimer of E1 interacts with a dimer of protein E2 leading to a complex that binds the viral origin of replication with high specificity. Then, a second dimer of E1 displaces the E2 dimer in an ATP-dependent manner to form the E1 tetramer. Following this, two E1 monomers are added to each half of the site, which results in the formation of two E1 trimers on the viral ori. Subsequently, two hexamers will be created. The double hexamer acts as a bi-directional helicase machinery and unwinds the viral DNA and then recruits the host DNA polymerase to start replication. This is Replication protein E1 from Human papillomavirus 65.